Reading from the N-terminus, the 682-residue chain is Zinc finger protein 16 (682 aa).

Residues 1-10 (MPSLRTRREE) show a composition bias toward basic and acidic residues. Residues 1 to 38 (MPSLRTRREEAEMELSAPGPSPWTPAAQARVSDAPAVT) are disordered. The necessary for transcription activation stretch occupies residues 62–210 (YQQPDCDTRT…GVPTAESPLI (149 aa)). A C2H2-type 1; degenerate zinc finger spans residues 209–231 (LICNECGKTFRGNPDLIQRQIVH). The C2H2-type 2; degenerate zinc-finger motif lies at 237–259 (FMCDDCGKTFSQNSVLKNRHRSH). Residue K253 forms a Glycyl lysine isopeptide (Lys-Gly) (interchain with G-Cter in SUMO2) linkage. 8 C2H2-type zinc fingers span residues 265–287 (YQCS…QSHH), 293–315 (YTCT…QKSH), 321–343 (YECN…QRIH), 349–371 (YVCS…HRTH), 377–399 (FECG…QRVH), 405–427 (YECN…HRVH), 433–455 (YKCS…RRIH), and 461–483 (HVCN…QIIH). Required for nuclear localization regions lie at residues 268–393 (SECG…AHLR) and 341–373 (RIHS…THTG). Positions 473–503 (SSVLRKHQIIHTGEKPYRCSVCGKAFSHSSA) are required for nuclear localization. K487 bears the N6-acetyllysine mark. 7 consecutive C2H2-type zinc fingers follow at residues 489 to 511 (YRCS…QGVH), 517 to 539 (YACH…QRVH), 545 to 567 (YECT…QRIH), 573 to 595 (HECN…QKVH), 601 to 623 (YTCV…QIIH), 629 to 651 (YKCS…QRIH), and 657 to 679 (YDCA…QLIH).

The protein belongs to the krueppel C2H2-type zinc-finger protein family. Interacts with INCA1; the interaction inhibits INCA1 activity and induces the cell cycle process.

It localises to the nucleus. Acts as a transcriptional activator. Promotes cell proliferation by facilitating the cell cycle phase transition from the S to G2/M phase. Involved in both the hemin- and phorbol myristate acetate (PMA)-induced erythroid and megakaryocytic differentiation, respectively. Also plays a role as an inhibitor of cell apoptosis. This is Zinc finger protein 16 (ZNF16) from Pan troglodytes (Chimpanzee).